The chain runs to 534 residues: Bifunctional purine biosynthesis protein PurH (534 aa).

The region spanning 6–151 (TRLPVRRALI…KNHKDVAIVV (146 aa)) is the MGS-like domain.

This sequence belongs to the PurH family.

It catalyses the reaction (6R)-10-formyltetrahydrofolate + 5-amino-1-(5-phospho-beta-D-ribosyl)imidazole-4-carboxamide = 5-formamido-1-(5-phospho-D-ribosyl)imidazole-4-carboxamide + (6S)-5,6,7,8-tetrahydrofolate. The catalysed reaction is IMP + H2O = 5-formamido-1-(5-phospho-D-ribosyl)imidazole-4-carboxamide. Its pathway is purine metabolism; IMP biosynthesis via de novo pathway; 5-formamido-1-(5-phospho-D-ribosyl)imidazole-4-carboxamide from 5-amino-1-(5-phospho-D-ribosyl)imidazole-4-carboxamide (10-formyl THF route): step 1/1. It participates in purine metabolism; IMP biosynthesis via de novo pathway; IMP from 5-formamido-1-(5-phospho-D-ribosyl)imidazole-4-carboxamide: step 1/1. The chain is Bifunctional purine biosynthesis protein PurH from Stutzerimonas stutzeri (strain A1501) (Pseudomonas stutzeri).